A 357-amino-acid polypeptide reads, in one-letter code: UPF0283 membrane protein BSUIS_A1077 (357 aa).

The disordered stretch occupies residues 1-36 (MSDKTPRKPTAFRLEQPARVSAASEQEEPRHPRAVK). Residues 27–36 (EEPRHPRAVK) are compositionally biased toward basic and acidic residues. The next 2 membrane-spanning stretches (helical) occupy residues 78–98 (ILFGALGILVSFAIGIWTEDL) and 109–129 (LGWTALGVAMVALAAFAAIIL).

It belongs to the UPF0283 family.

It is found in the cell inner membrane. The sequence is that of UPF0283 membrane protein BSUIS_A1077 from Brucella suis (strain ATCC 23445 / NCTC 10510).